The chain runs to 499 residues: Glycerol kinase (499 aa).

Threonine 17 contacts ADP. Residues threonine 17, threonine 18, and serine 19 each coordinate ATP. Residue threonine 17 coordinates sn-glycerol 3-phosphate. Arginine 21 contributes to the ADP binding site. The sn-glycerol 3-phosphate site is built by arginine 87, glutamate 88, tyrosine 139, and aspartate 243. Positions 87, 88, 139, 243, and 244 each coordinate glycerol. Threonine 265 and glycine 308 together coordinate ADP. 4 residues coordinate ATP: threonine 265, glycine 308, glutamine 312, and glycine 409. ADP-binding residues include glycine 409 and asparagine 413.

Belongs to the FGGY kinase family.

It catalyses the reaction glycerol + ATP = sn-glycerol 3-phosphate + ADP + H(+). The protein operates within polyol metabolism; glycerol degradation via glycerol kinase pathway; sn-glycerol 3-phosphate from glycerol: step 1/1. Inhibited by fructose 1,6-bisphosphate (FBP). Functionally, key enzyme in the regulation of glycerol uptake and metabolism. Catalyzes the phosphorylation of glycerol to yield sn-glycerol 3-phosphate. In Pseudomonas putida (strain ATCC 700007 / DSM 6899 / JCM 31910 / BCRC 17059 / LMG 24140 / F1), this protein is Glycerol kinase.